The sequence spans 208 residues: Urease accessory protein UreG (208 aa).

10–17 serves as a coordination point for GTP; that stretch reads GPVGSGKT.

Belongs to the SIMIBI class G3E GTPase family. UreG subfamily. Homodimer. UreD, UreF and UreG form a complex that acts as a GTP-hydrolysis-dependent molecular chaperone, activating the urease apoprotein by helping to assemble the nickel containing metallocenter of UreC. The UreE protein probably delivers the nickel.

The protein localises to the cytoplasm. Facilitates the functional incorporation of the urease nickel metallocenter. This process requires GTP hydrolysis, probably effectuated by UreG. This is Urease accessory protein UreG from Halalkalibacterium halodurans (strain ATCC BAA-125 / DSM 18197 / FERM 7344 / JCM 9153 / C-125) (Bacillus halodurans).